Here is a 343-residue protein sequence, read N- to C-terminus: N-acetyl-gamma-glutamyl-phosphate reductase (343 aa).

Cys146 is a catalytic residue.

The protein belongs to the NAGSA dehydrogenase family. Type 1 subfamily.

Its subcellular location is the cytoplasm. The enzyme catalyses N-acetyl-L-glutamate 5-semialdehyde + phosphate + NADP(+) = N-acetyl-L-glutamyl 5-phosphate + NADPH + H(+). It functions in the pathway amino-acid biosynthesis; L-arginine biosynthesis; N(2)-acetyl-L-ornithine from L-glutamate: step 3/4. Catalyzes the NADPH-dependent reduction of N-acetyl-5-glutamyl phosphate to yield N-acetyl-L-glutamate 5-semialdehyde. The protein is N-acetyl-gamma-glutamyl-phosphate reductase of Paenarthrobacter aurescens (strain TC1).